A 485-amino-acid chain; its full sequence is Cysteine--tRNA ligase (485 aa).

Zn(2+) is bound at residue Cys-27. A 'HIGH' region motif is present at residues 29 to 39 (ITAYDLCHIGH). Residues Cys-208, His-233, and Glu-237 each coordinate Zn(2+). A 'KMSKS' region motif is present at residues 265–269 (KMSKS). Lys-268 lines the ATP pocket.

Belongs to the class-I aminoacyl-tRNA synthetase family. Monomer. Zn(2+) serves as cofactor.

It is found in the cytoplasm. It catalyses the reaction tRNA(Cys) + L-cysteine + ATP = L-cysteinyl-tRNA(Cys) + AMP + diphosphate. In Maridesulfovibrio salexigens (strain ATCC 14822 / DSM 2638 / NCIMB 8403 / VKM B-1763) (Desulfovibrio salexigens), this protein is Cysteine--tRNA ligase.